Reading from the N-terminus, the 134-residue chain is Bradykinin-related peptides (134 aa).

A signal peptide spans 1–22 (MAFLKKSLFLVLFLGVVSLSFC). 3 consecutive propeptides follow at residues 23–44 (EEEK…ESLG), 71–82 (RSISGLTPIRLS), and 99–121 (ISEA…PLRG). A compositionally biased stretch (basic and acidic residues) spans 24–33 (EEKREEHEEE). The interval 24-71 (EEKREEHEEEKRDEEDAESLGKRYGGLSPLRISKRVPPGFTPFRSPAR) is disordered. Pro126 carries the post-translational modification 4-hydroxyproline; partial; in form [Hyp3]-bradykinin and [Hyp3]-bradykinin-Val,Asp.

Belongs to the frog skin active peptide (FSAP) family. Bradykinin-related peptide subfamily. Expressed by the skin glands. Expression levels in inguinal glands are much higher than in granular glands.

The protein localises to the secreted. Functionally, may produce in vitro relaxation of rat arterial smooth muscle and constriction of intestinal smooth muscle. May target bradykinin receptors (BDKRB). This is Bradykinin-related peptides from Physalaemus nattereri (Cuyaba dwarf frog).